Reading from the N-terminus, the 279-residue chain is Acyl-coenzyme A thioesterase MBLAC2 (279 aa).

Residue Ser-2 is modified to N-acetylserine. Zn(2+) contacts are provided by His-83, His-85, Asp-87, His-88, His-170, Asp-189, and His-231. Cys-254 carries S-palmitoyl cysteine lipidation.

It belongs to the metallo-beta-lactamase superfamily. Glyoxalase II family. Zn(2+) is required as a cofactor. Palmitoylated on Cys-254 by ZDHHC20.

It localises to the endoplasmic reticulum membrane. Its subcellular location is the cell membrane. It catalyses the reaction hexadecanoyl-CoA + H2O = hexadecanoate + CoA + H(+). It carries out the reaction dodecanoyl-CoA + H2O = dodecanoate + CoA + H(+). The enzyme catalyses tetradecanoyl-CoA + H2O = tetradecanoate + CoA + H(+). The catalysed reaction is octadecanoyl-CoA + H2O = octadecanoate + CoA + H(+). It catalyses the reaction a beta-lactam + H2O = a substituted beta-amino acid. Its activity is regulated as follows. Beta-lactamase activity is inhibited by sulbactam. Its function is as follows. Acyl-CoA thioesterases are a group of enzymes that catalyze the hydrolysis of acyl-CoAs to the free fatty acid and coenzyme A (CoASH), providing the potential to regulate intracellular levels of acyl-CoAs, free fatty acids and CoASH. Has an acyl-CoA thioesterase activity towards the long chain fatty acyl-CoA thioester palmitoyl-CoA (hexadecanoyl-CoA; C16:0-CoA). Displays a substrate preference for fatty acyl-CoAs with chain-lengths C12-C18. Possesses beta-lactamase activity, catalyzing the hydrolysis of penicillin G and nitrocefin. Exhibits no activity towards other beta-lactam antibiotic classes including cephalosporins (cefotaxime) and carbapenems (imipenem). The polypeptide is Acyl-coenzyme A thioesterase MBLAC2 (MBLAC2) (Homo sapiens (Human)).